A 296-amino-acid chain; its full sequence is Partitioning protein REP2 (296 aa).

At M1 the chain carries N-acetylmethionine. The tract at residues 1-57 (MDDIETAKNLTVKARTAYSVWDVCRLFIEMIAPDVDIDIESKRKSDELLFPGYVIRP) is interaction with REP1. The segment at 58–296 (MESLTTGRPY…GRKSRNTSRV (239 aa)) is DNA-binding, and self-association. The disordered stretch occupies residues 228–296 (SELEGRTEVN…GRKSRNTSRV (69 aa)). Basic residues predominate over residues 275-296 (PTKKRRVATRVRGRKSRNTSRV). A nuclear localization region spans residues 276–296 (TKKRRVATRVRGRKSRNTSRV).

As to quaternary structure, interacts with REP1.

It is found in the nucleus. In terms of biological role, part of the plasmid partitioning system, which ensures the equal distribution of replicated plasmid molecules to daughter cells. The plasmids exist as well-organized plasmid foci within the nucleus that stay together throughout the cell-cycle and act as entity during segregation, effetively reducing copy number to one. Plasmid partitioning requires the proteins REP1, REP2, and a cis-acting locus STB (REP3). REP1-REP2 stably associate with CSE4-containing chromatin at STB during S-phase, marking the locus with a centromeric tag, and thereby probably catching mitotic spindle microtubules to the plasmid cluster and coupling plasmid segregation to chromosome segregation. REP1-REP2 are required to recruit the cohesin complex to the STB locus for pairing of the replicated plasmid cluster, a prerequisite for successful plasmid segregation. REP1-REP2 also negatively regulate expression of site-specific recombinase FLP and of RAF1. The chain is Partitioning protein REP2 (REP2) from Saccharomyces cerevisiae (strain ATCC 204508 / S288c) (Baker's yeast).